The chain runs to 110 residues: Large ribosomal subunit protein P1B (110 aa).

Residues 69–85 show a composition bias toward low complexity; the sequence is PAAGGAGAPAAAAGGEA. Residues 69–110 are disordered; sequence PAAGGAGAPAAAAGGEAAAEEQKEEAKEEEESDEDMGFGLFD. A compositionally biased stretch (acidic residues) spans 95 to 104; that stretch reads KEEEESDEDM.

Belongs to the eukaryotic ribosomal protein P1/P2 family. In terms of assembly, component of the large ribosomal subunit (LSU). Mature yeast ribosomes consist of a small (40S) and a large (60S) subunit. The 40S small subunit contains 1 molecule of ribosomal RNA (18S rRNA) and at least 33 different proteins. The large 60S subunit contains 3 rRNA molecules (25S, 5.8S and 5S rRNA) and at least 46 different proteins. The acidic ribosomal P-proteins form the stalk structure of the 60S subunit. They are organized as a pentameric complex in which uL10/P0 interacts with 2 heterodimers of P1 and P2 proteins.

The protein localises to the cytoplasm. Functionally, component of the ribosome, a large ribonucleoprotein complex responsible for the synthesis of proteins in the cell. The small ribosomal subunit (SSU) binds messenger RNAs (mRNAs) and translates the encoded message by selecting cognate aminoacyl-transfer RNA (tRNA) molecules. The large subunit (LSU) contains the ribosomal catalytic site termed the peptidyl transferase center (PTC), which catalyzes the formation of peptide bonds, thereby polymerizing the amino acids delivered by tRNAs into a polypeptide chain. The nascent polypeptides leave the ribosome through a tunnel in the LSU and interact with protein factors that function in enzymatic processing, targeting, and the membrane insertion of nascent chains at the exit of the ribosomal tunnel. The sequence is that of Large ribosomal subunit protein P1B (rpp102) from Schizosaccharomyces pombe (strain 972 / ATCC 24843) (Fission yeast).